Consider the following 515-residue polypeptide: RNA-splicing ligase RtcB homolog (515 aa).

Mn(2+)-binding residues include aspartate 129, cysteine 132, histidine 237, histidine 269, and histidine 363. Position 236–240 (236–240) interacts with GMP; it reads NHYAE. GMP is bound by residues 363–364, 412–415, serine 419, 438–441, and lysine 514; these read HN, GGTM, and HGAG. Histidine 438 acts as the GMP-histidine intermediate in catalysis.

Belongs to the RtcB family. In terms of assembly, catalytic component of the tRNA-splicing ligase complex. Mn(2+) is required as a cofactor.

The catalysed reaction is a 3'-end 3'-phospho-ribonucleotide-RNA + a 5'-end dephospho-ribonucleoside-RNA + GTP = a ribonucleotidyl-ribonucleotide-RNA + GMP + diphosphate. The enzyme catalyses a 3'-end 2',3'-cyclophospho-ribonucleotide-RNA + a 5'-end dephospho-ribonucleoside-RNA + GTP + H2O = a ribonucleotidyl-ribonucleotide-RNA + GMP + diphosphate + H(+). Catalytic subunit of the tRNA-splicing ligase complex that acts by directly joining spliced tRNA halves to mature-sized tRNAs by incorporating the precursor-derived splice junction phosphate into the mature tRNA as a canonical 3',5'-phosphodiester. May act as an RNA ligase with broad substrate specificity, and may function toward other RNAs. The polypeptide is RNA-splicing ligase RtcB homolog (Ostreococcus tauri).